The chain runs to 378 residues: POU domain, class 3, transcription factor 2 (378 aa).

Disordered stretches follow at residues 1–28 (MATTASNHYNILTSSPSIVHSEPGSMQQ), 86–118 (SPRDEMHNSSNLQHQSRPPHLVHQTHGNHHDSR), and 151–205 (LIPG…TPTS). Over residues 164 to 181 (MRDAHEDHHSPHLSDHGH) the composition is skewed to basic and acidic residues. A POU-specific domain is found at 200-274 (EDTPTSDDLE…LLNKWLEEAD (75 aa)). Ser279 bears the Phosphoserine mark. Positions 292-351 (KRKKRTSIEVSVKGALESHFLKCPKPAASEITSLADSLQLEKEVVRVWFCNRRQKEKRMT) form a DNA-binding region, homeobox. The tract at residues 347–378 (EKRMTPPGGPLPGTEDVYGDTPPHHGVQTPVQ) is disordered.

This sequence belongs to the POU transcription factor family. Class-3 subfamily. In terms of tissue distribution, predominantly expressed in the central nervous system, with strong expression in the cerebellum.

It is found in the nucleus. Transcription factor that may play important roles in patterning the embryonic brain. The chain is POU domain, class 3, transcription factor 2 (pou3f2) from Danio rerio (Zebrafish).